We begin with the raw amino-acid sequence, 173 residues long: Probable DNA-directed RNA polymerase subunit delta (173 aa).

An HTH HARE-type domain is found at 14–81 (NSFIDLAYMA…GEYMWGLRDW (68 aa)). The interval 113–173 (LLGEDEVEDE…DEFDDEEEEE (61 aa)) is disordered. The segment covering 115-173 (GEDEVEDELDLLPSDGDEENVDTEDEEVEDELDEAGLVVEPDEEFEDEEDEFDDEEEEE) has biased composition (acidic residues).

Belongs to the RpoE family. As to quaternary structure, RNAP is composed of a core of 2 alpha, a beta and a beta' subunits. The core is associated with a delta subunit and one of several sigma factors.

Its function is as follows. Participates in both the initiation and recycling phases of transcription. In the presence of the delta subunit, RNAP displays an increased specificity of transcription, a decreased affinity for nucleic acids, and an increased efficiency of RNA synthesis because of enhanced recycling. The polypeptide is Probable DNA-directed RNA polymerase subunit delta (Macrococcus caseolyticus (strain JCSC5402) (Macrococcoides caseolyticum)).